Consider the following 376-residue polypeptide: Carboxylic ester hydrolase LipN (376 aa).

Catalysis depends on residues S216, D316, and H346.

The protein belongs to the 'GDXG' lipolytic enzyme family.

Its subcellular location is the cytoplasm. The catalysed reaction is a carboxylic ester + H2O = an alcohol + a carboxylate + H(+). It carries out the reaction an acetyl ester + H2O = an aliphatic alcohol + acetate + H(+). The enzyme catalyses a butanoate ester + H2O = an aliphatic alcohol + butanoate + H(+). It catalyses the reaction an octanoate ester + H2O = an aliphatic alcohol + octanoate + H(+). The catalysed reaction is decanoate ester + H2O = decanoate + an aliphatic alcohol + H(+). It carries out the reaction a dodecanoate ester + H2O = an aliphatic alcohol + dodecanoate + H(+). The enzyme catalyses 1,2,3-tributanoylglycerol + H2O = dibutanoylglycerol + butanoate + H(+). It catalyses the reaction 4-acetoxyphenol + H2O = hydroquinone + acetate + H(+). Its activity is regulated as follows. Completely inhibited by tetrahydrolipstatin (THL), RHC-80267 and N-bromosuccinimide. Non specific carboxylic ester hydrolase. Hydrolyzes various pNP-esters, with a preference for short carbon chain substrates. Can also hydrolyze tributyrin to di- and monobutyrin and 4-hydroxyphenylacetate to hydroquinone. The protein is Carboxylic ester hydrolase LipN of Mycobacterium tuberculosis (strain ATCC 25618 / H37Rv).